Reading from the N-terminus, the 431-residue chain is MNVLIIGSGGREHALAWKVAQDPRVQKVFVAPGNAGTAIEAKCENVAIDVLALEQLADFAENNVSLTIVGPEVPLVAGVVDLFRSRGLDCFGPTAGAAQLEGSKAFTKDFLARHKIPTADYQNFTEIEPALAYLREKGAPIVIKADGLAAGKGVIVAMTLTEAEDAVQDMLAGNAFGEAGSRVVIEEFLDGEEASFIVMVDGKNVLPMATSQDHKRVGDGDSGPNTGGMGAYSPAPVVTADVHQRVMDLVIWPTVRGMADEGNVYTGFLYAGLMIDKAGNPKVIEFNCRFGDPETQPVMLRLQSSLVLLIEAALAQALDKVEAQWDPRPSLGIVLAAGGYPGDYAKGAIIEGLDAAALLEGKIFHAGTTLQDDRVVTSGGRVLCATALGDSVGSAQKNAYALAAKVDWQGCFYRTDIGYRAIARERGEDQE.

An ATP-grasp domain is found at 108–315; that stretch reads KDFLARHKIP…LVLLIEAALA (208 aa). 134–195 serves as a coordination point for ATP; that stretch reads LREKGAPIVI…EEFLDGEEAS (62 aa). Mg(2+) contacts are provided by E285 and N287.

Belongs to the GARS family. Mg(2+) serves as cofactor. Mn(2+) is required as a cofactor.

It carries out the reaction 5-phospho-beta-D-ribosylamine + glycine + ATP = N(1)-(5-phospho-beta-D-ribosyl)glycinamide + ADP + phosphate + H(+). The protein operates within purine metabolism; IMP biosynthesis via de novo pathway; N(1)-(5-phospho-D-ribosyl)glycinamide from 5-phospho-alpha-D-ribose 1-diphosphate: step 2/2. In Pseudomonas syringae pv. tomato (strain ATCC BAA-871 / DC3000), this protein is Phosphoribosylamine--glycine ligase.